A 461-amino-acid polypeptide reads, in one-letter code: Fumarate hydratase class II (461 aa).

Residues 97 to 99, 127 to 130, 137 to 139, and Thr-185 contribute to the substrate site; these read SGT, HPND, and SSN. His-186 serves as the catalytic Proton donor/acceptor. Residue Ser-316 is part of the active site. Substrate contacts are provided by residues Ser-317 and 322–324; that span reads KVN.

Belongs to the class-II fumarase/aspartase family. Fumarase subfamily. In terms of assembly, homotetramer.

It is found in the cytoplasm. It catalyses the reaction (S)-malate = fumarate + H2O. It participates in carbohydrate metabolism; tricarboxylic acid cycle; (S)-malate from fumarate: step 1/1. In terms of biological role, involved in the TCA cycle. Catalyzes the stereospecific interconversion of fumarate to L-malate. This Staphylococcus aureus (strain COL) protein is Fumarate hydratase class II.